The sequence spans 339 residues: Phosphate acyltransferase (339 aa).

Belongs to the PlsX family. Homodimer. Probably interacts with PlsY.

The protein resides in the cytoplasm. The catalysed reaction is a fatty acyl-[ACP] + phosphate = an acyl phosphate + holo-[ACP]. The protein operates within lipid metabolism; phospholipid metabolism. Functionally, catalyzes the reversible formation of acyl-phosphate (acyl-PO(4)) from acyl-[acyl-carrier-protein] (acyl-ACP). This enzyme utilizes acyl-ACP as fatty acyl donor, but not acyl-CoA. This chain is Phosphate acyltransferase, found in Helicobacter pylori (strain Shi470).